The following is a 90-amino-acid chain: MSRHVTVVLLLAVVLLLSSHMSHGQHWSYGLWPGGKREVEGLQESYSEVPNEVSFTDPQHFERSIPQNRISLVREALMNWLEGENTRKKI.

The first 24 residues, methionine 1–glycine 24, serve as a signal peptide directing secretion. Glutamine 25 is subject to Pyrrolidone carboxylic acid. Glycine amide is present on glycine 34.

Belongs to the GnRH family. Expressed in forebrain but not in testis, ovary, kidney and liver.

The protein resides in the secreted. Functionally, stimulates the secretion of gonadotropins. This is Trp-8 progonadoliberin from Rana dybowskii (Dybovsky's frog).